The chain runs to 2442 residues: Histone lysine acetyltransferase CREBBP (2442 aa).

Disordered stretches follow at residues 1–40 (MAEN…ENDL) and 74–168 (RGGS…PATS). Ala-2 is subject to N-acetylalanine. The segment covering 20–30 (PGFSANDSTDF) has biased composition (polar residues). Ser-120 bears the Phosphoserine mark. Residues 125 to 168 (GDSSTPSLPKQAASTSGPTPPASQALNPQAQKQVGLVTSSPATS) show a composition bias toward polar residues. Arg-219 is subject to Omega-N-methylarginine. Positions 226-409 (PAPAMQGATS…GKACQVAHCA (184 aa)) are interaction with SRCAP. Positions 261–272 (GGMTKMGMTGNT) are enriched in low complexity. The interval 261-290 (GGMTKMGMTGNTSPFGQPFSQTGGQPMGAT) is disordered. The segment covering 273–284 (SPFGQPFSQTGG) has biased composition (polar residues). The TAZ-type 1 zinc-finger motif lies at 346–432 (DPEKRKLIQQ…RHDCPVCLPL (87 aa)). Zn(2+) is bound by residues His-362, Cys-366, Cys-379, Cys-384, His-393, Cys-397, Cys-403, Cys-408, His-417, Cys-421, Cys-426, and Cys-429. The KIX domain maps to 586 to 665 (GVRKGWHEHV…KIYKIQKELE (80 aa)). Arg-600 and Arg-624 each carry asymmetric dimethylarginine. Lys-656 carries the post-translational modification N6-acetyllysine. Residues 792–825 (FLPQNQFPSSSGAMSVNSVGMGQPATQAGVSQGQ) are compositionally biased toward polar residues. The interval 792-1084 (FLPQNQFPSS…STSPSQPRKK (293 aa)) is disordered. 2 stretches are compositionally biased toward pro residues: residues 846 to 862 (PCPP…PPPA) and 874 to 887 (PTPP…PAAP). Polar residues predominate over residues 894-906 (VSSGQTPTPTPGS). 2 stretches are compositionally biased toward low complexity: residues 909-930 (SAAQ…VTPQ) and 938-957 (PSVA…HTQP). Positions 974–989 (PTPSSVTSAETSSQQP) are enriched in polar residues. Residue Lys-999 forms a Glycyl lysine isopeptide (Lys-Gly) (interchain with G-Cter in SUMO1) linkage. The span at 1012–1022 (AESKGEPRSEM) shows a compositional bias: basic and acidic residues. Lys-1015 is modified (N6-acetyllysine). Residue Ser-1031 is modified to Phosphoserine. The segment covering 1033 to 1060 (VKEETDTTEQKSEPMEVEEKKPEVKVEA) has biased composition (basic and acidic residues). Residues Lys-1034 and Lys-1057 each participate in a glycyl lysine isopeptide (Lys-Gly) (interchain with G-Cter in SUMO1) cross-link. The span at 1067–1080 (SANGTASQSTSPSQ) shows a compositional bias: polar residues. Residue Ser-1077 is modified to Phosphoserine. In terms of domain architecture, Bromo spans 1086–1193 (FKPEELRQAL…EVFEQEIDPV (108 aa)). An interaction with histone region spans residues 1125–1171 (DYFDIVKNPMDLSTIKRKLDTGQYQEPWQYVDDVWLMFNNAWLYNRK). Residues 1163–1181 (NNAWLYNRKTSRVYKFCSK) are interaction with ASF1A. At Lys-1217 the chain carries N6-acetyllysine. Residues 1324–1701 (KFSAKRLQTT…MLVELHTQGQ (378 aa)) form the CBP/p300-type HAT domain. Residues Ser-1383 and Ser-1387 each carry the phosphoserine; by IKKA modification. The tract at residues 1434 to 1436 (YLD) is interaction with histone. Residues 1435–1437 (LDS), 1447–1448 (RT), Ile-1494, Arg-1499, and Trp-1503 contribute to the acetyl-CoA site. A coiled-coil region spans residues 1548-1575 (NVLEESIKELEQEEEERKKEESTAASET). Positions 1557–1569 (LEQEEEERKKEES) are enriched in basic and acidic residues. The tract at residues 1557-1616 (LEQEEEERKKEESTAASETPEGSQGDSKNAKKKNNKKTNKNKSSISRANKKKPSMPNVSN) is disordered. 5 positions are modified to N6-acetyllysine: Lys-1584, Lys-1592, Lys-1593, Lys-1596, and Lys-1598. The segment covering 1586–1596 (AKKKNNKKTNK) has biased composition (basic residues). The ZZ-type zinc finger occupies 1703 to 1751 (RFVYTCNECKHHVETRWHCTVCEDYDLCINCYNTKSHTHKMVKWGLGLD). Cys-1708, Cys-1711, Cys-1721, Cys-1724, Cys-1730, Cys-1733, His-1739, and His-1741 together coordinate Zn(2+). An N6-acetyllysine mark is found at Lys-1742 and Lys-1745. Position 1764 is a phosphoserine (Ser-1764). The TAZ-type 2 zinc-finger motif lies at 1766 to 1847 (QESRRLSIQR…KCPVPFCLNI (82 aa)). The segment at 1875-1960 (TRNVPQQSLP…QPPPAAVEAA (86 aa)) is disordered. Composition is skewed to pro residues over residues 1901 to 1913 (PQTP…PQPS) and 1944 to 1955 (PAPPPPAQPPPA). A phosphoserine mark is found at Ser-2064, Ser-2077, and Ser-2080. Positions 2112 to 2421 (NQPGMQPQPG…LNTPNRSALS (310 aa)) are disordered. Low complexity-rich tracts occupy residues 2113 to 2138 (QPGM…HQQP), 2197 to 2217 (QLLQ…QQQQ), 2261 to 2280 (MGQM…PGLG), and 2287 to 2305 (IQQA…KQQI). 2 stretches are compositionally biased toward polar residues: residues 2315-2327 (SPQQ…QPQA) and 2334-2343 (QIATSLSNQV). The span at 2349–2372 (VQSPRPQSQPPHSSPSPRIQPQPS) shows a compositional bias: pro residues. Ser-2351 bears the Phosphoserine mark. Residues 2411–2421 (QLNTPNRSALS) are compositionally biased toward polar residues.

As to quaternary structure, part of a complex composed of MSX3, CREBBP/CBP AND EP300/p300; the interaction with MSX3 decreases histone acetylation activity. Found in a complex containing NCOA2; NCOA3; IKKA; IKKB and IKBKG. Probably part of a complex with HIF1A and EP300. Interacts with phosphorylated CREB1. Interacts with the C-terminal region of CITED4. The TAZ-type 1 domain interacts with HIF1A. Interacts with SRCAP, CARM1, ELF3, MLLT7/FOXO4, N4BP2, NCOA1, NCOA3, NCOA6, PCAF, DDX5, DDX17, PELP1, PML, SMAD1, SMAD2, SMAD3, SPIB, TRERF1 and ZCCHC12. Interacts with KLF1; the interaction results in acetylation and enhancement of transcriptional activity of KLF1. Interacts with DAXX; the interaction is dependent on CBP sumoylation and results in suppression of the transcriptional activity via recruitment of HDAC2 to DAXX. Interacts with MAF. Interacts with MTDH. Interacts with MAFG; the interaction acetylates MAFG in the basic region and stimulates NFE2 transcriptional activity through increasing its DNA-binding activity. Interacts with IRF2; the interaction acetylates IRF2 and regulates its activity on the H4 promoter. Interacts (via N-terminus) with SS18L1/CREST (via C-terminus). Interacts with IRF3 (when phosphorylated); forming the dsRNA-activated factor 1 (DRAF1), a complex which activates the transcription of the type I interferon genes. Interacts with MECOM. Interacts with CITED1 (via C-terminus) Interacts with GATA1; the interaction results in acetylation and enhancement of transcriptional activity of GATA1. Interacts with FOXO1; the interaction acetylates FOXO1 and inhibits its transcriptional activity. Interacts with NPAS2, CLOCK and BMAL1. Interacts with ASF1A and ASF1B; this promotes histone acetylation. Interacts with acetylated TP53/p53 and with the acetylated histones H3 and H4. Interacts (via transactivation domain and C-terminus) with PCNA; the interaction occurs on chromatin in UV-irradiated damaged cells. Interacts with DHX9 (via N-terminus); this interaction mediates association with RNA polymerase II holoenzyme and stimulates CREB-dependent transcriptional activation. Interacts with SMAD4; negatively regulated by ZBTB7A. Forms a complex with KMT2A and CREB1. Interacts with DDX3X; this interaction may facilitate HNF4A acetylation. Interacts with MSX1; the interaction may inhibit MSX1 autoinactivation. Interacts with MSX3. Interacts with ACSS2. Methylation of the KIX domain by CARM1 blocks association with CREB. This results in the blockade of CREB signaling, and in activation of apoptotic response. Post-translationally, phosphorylated by CHUK/IKKA at Ser-1383 and Ser-1387; these phosphorylations promote cell growth by switching the binding preference of CREBBP from TP53 to NF-kappa-B. In terms of processing, sumoylation negatively regulates transcriptional activity via the recruitment of DAAX. Autoacetylation is required for binding to protein substrates, such as acetylated histones and acetylated TP53/p53. Autoacetylation is induced by glucose and fatty acids. Expressed in hypothalamus and cortex.

It localises to the cytoplasm. The protein resides in the nucleus. It carries out the reaction L-lysyl-[histone] + acetyl-CoA = N(6)-acetyl-L-lysyl-[histone] + CoA + H(+). It catalyses the reaction L-lysyl-[protein] + acetyl-CoA = N(6)-acetyl-L-lysyl-[protein] + CoA + H(+). The catalysed reaction is (S)-lactoyl-CoA + L-lysyl-[protein] = N(6)-[(S)-lactoyl]-L-lysyl-[protein] + CoA + H(+). Its function is as follows. Acetylates histones, giving a specific tag for transcriptional activation. Mediates acetylation of histone H3 at 'Lys-18' and 'Lys-27' (H3K18ac and H3K27ac, respectively). Also acetylates non-histone proteins, like DDX21, FBL, IRF2, MAFG, NCOA3, POLR1E/PAF53 and FOXO1. Binds specifically to phosphorylated CREB and enhances its transcriptional activity toward cAMP-responsive genes. Acts as a coactivator of ALX1. Acts as a circadian transcriptional coactivator which enhances the activity of the circadian transcriptional activators: NPAS2-BMAL1 and CLOCK-BMAL1 heterodimers. Acetylates PCNA; acetylation promotes removal of chromatin-bound PCNA and its degradation during nucleotide excision repair (NER). Acetylates POLR1E/PAF53, leading to decreased association of RNA polymerase I with the rDNA promoter region and coding region. Acetylates DDX21, thereby inhibiting DDX21 helicase activity. Acetylates FBL, preventing methylation of 'Gln-105' of histone H2A (H2AQ104me). In addition to protein acetyltransferase, can use different acyl-CoA substrates, such as lactoyl-CoA, and is able to mediate protein lactylation. Catalyzes lactylation of MRE11 in response to DNA damage, thereby promoting DNA double-strand breaks (DSBs) via homologous recombination (HR). Functions as a transcriptional coactivator for SMAD4 in the TGF-beta signaling pathway. The protein is Histone lysine acetyltransferase CREBBP (Crebbp) of Rattus norvegicus (Rat).